The chain runs to 533 residues: Histone-arginine methyltransferase CARMER (533 aa).

One can recognise an SAM-dependent MTase PRMT-type domain in the interval 143 to 452 (ASQYFQFYGY…QSYDVTIDLH (310 aa)). S-adenosyl-L-methionine is bound by residues Gln-156, Arg-165, Gly-189, Glu-211, Glu-240, and Thr-268. Arg-503 carries the asymmetric dimethylarginine; by autocatalysis modification.

Belongs to the class I-like SAM-binding methyltransferase superfamily. Protein arginine N-methyltransferase family. As to quaternary structure, homodimer. Post-translationally, the dimethylated protein is the major form.

Its subcellular location is the cytoplasm. The protein localises to the nucleus. It catalyses the reaction L-arginyl-[protein] + 2 S-adenosyl-L-methionine = N(omega),N(omega)-dimethyl-L-arginyl-[protein] + 2 S-adenosyl-L-homocysteine + 2 H(+). Its function is as follows. Methylates (mono- and asymmetric dimethylation) the guanidino nitrogens of arginyl residues in proteins. May methylate histone H3 at 'Arg-17' and activate transcription via chromatin remodeling. This Drosophila willistoni (Fruit fly) protein is Histone-arginine methyltransferase CARMER (Art4).